The following is a 165-amino-acid chain: NAD(P)H-quinone oxidoreductase subunit I, chloroplastic (165 aa).

4Fe-4S ferredoxin-type domains follow at residues 55 to 84 and 95 to 124; these read GRIH…VDWE and KSYS…MTEE. The [4Fe-4S] cluster site is built by Cys64, Cys67, Cys70, Cys74, Cys104, Cys107, Cys110, and Cys114.

The protein belongs to the complex I 23 kDa subunit family. As to quaternary structure, NDH is composed of at least 16 different subunits, 5 of which are encoded in the nucleus. [4Fe-4S] cluster serves as cofactor.

It localises to the plastid. The protein localises to the chloroplast thylakoid membrane. The catalysed reaction is a plastoquinone + NADH + (n+1) H(+)(in) = a plastoquinol + NAD(+) + n H(+)(out). It catalyses the reaction a plastoquinone + NADPH + (n+1) H(+)(in) = a plastoquinol + NADP(+) + n H(+)(out). In terms of biological role, NDH shuttles electrons from NAD(P)H:plastoquinone, via FMN and iron-sulfur (Fe-S) centers, to quinones in the photosynthetic chain and possibly in a chloroplast respiratory chain. The immediate electron acceptor for the enzyme in this species is believed to be plastoquinone. Couples the redox reaction to proton translocation, and thus conserves the redox energy in a proton gradient. The polypeptide is NAD(P)H-quinone oxidoreductase subunit I, chloroplastic (Psilotum nudum (Whisk fern)).